Consider the following 263-residue polypeptide: Endonuclease 8 (263 aa).

Pro-2 (schiff-base intermediate with DNA) is an active-site residue. The active-site Proton donor is Glu-3. Residue Lys-53 is the Proton donor; for beta-elimination activity of the active site. 3 residues coordinate DNA: Gln-70, Arg-125, and Asn-169. The segment at 229-263 (KVFHRDGESCERCGGIIERTMLSSRPFYWCPHCQR) adopts an FPG-type zinc-finger fold. The Proton donor; for delta-elimination activity role is filled by Arg-253.

The protein belongs to the FPG family. It depends on Zn(2+) as a cofactor.

The catalysed reaction is 2'-deoxyribonucleotide-(2'-deoxyribose 5'-phosphate)-2'-deoxyribonucleotide-DNA = a 3'-end 2'-deoxyribonucleotide-(2,3-dehydro-2,3-deoxyribose 5'-phosphate)-DNA + a 5'-end 5'-phospho-2'-deoxyribonucleoside-DNA + H(+). In terms of biological role, involved in base excision repair of DNA damaged by oxidation or by mutagenic agents. Acts as a DNA glycosylase that recognizes and removes damaged bases. Has a preference for oxidized pyrimidines, such as thymine glycol, 5,6-dihydrouracil and 5,6-dihydrothymine. Has AP (apurinic/apyrimidinic) lyase activity and introduces nicks in the DNA strand. Cleaves the DNA backbone by beta-delta elimination to generate a single-strand break at the site of the removed base with both 3'- and 5'-phosphates. This chain is Endonuclease 8, found in Pectobacterium carotovorum subsp. carotovorum (strain PC1).